The primary structure comprises 270 residues: 3-methyl-2-oxobutanoate hydroxymethyltransferase (270 aa).

Mg(2+) contacts are provided by Asp-41 and Asp-80. 3-methyl-2-oxobutanoate is bound by residues 41–42 (DS), Asp-80, and Lys-109. Position 111 (Glu-111) interacts with Mg(2+). Catalysis depends on Glu-178, which acts as the Proton acceptor.

The protein belongs to the PanB family. Homodecamer; pentamer of dimers. Requires Mg(2+) as cofactor.

The protein resides in the cytoplasm. The catalysed reaction is 3-methyl-2-oxobutanoate + (6R)-5,10-methylene-5,6,7,8-tetrahydrofolate + H2O = 2-dehydropantoate + (6S)-5,6,7,8-tetrahydrofolate. It participates in cofactor biosynthesis; (R)-pantothenate biosynthesis; (R)-pantoate from 3-methyl-2-oxobutanoate: step 1/2. Its function is as follows. Catalyzes the reversible reaction in which hydroxymethyl group from 5,10-methylenetetrahydrofolate is transferred onto alpha-ketoisovalerate to form ketopantoate. The sequence is that of 3-methyl-2-oxobutanoate hydroxymethyltransferase from Thermotoga maritima (strain ATCC 43589 / DSM 3109 / JCM 10099 / NBRC 100826 / MSB8).